A 119-amino-acid chain; its full sequence is Small ribosomal subunit protein uS10 (119 aa).

N-acetylalanine is present on Ala-2. Residue Lys-4 forms a Glycyl lysine isopeptide (Lys-Gly) (interchain with G-Cter in ubiquitin) linkage. An N6-succinyllysine; alternate modification is found at Lys-8. Lys-8 is covalently cross-linked (Glycyl lysine isopeptide (Lys-Gly) (interchain with G-Cter in ubiquitin); alternate). A Phosphothreonine modification is found at Thr-9. N6-acetyllysine occurs at positions 34 and 75. Ser-93 is subject to Phosphoserine.

This sequence belongs to the universal ribosomal protein uS10 family. Component of the 40S small ribosomal subunit. In terms of processing, polyubiquitinated by ZNF598 via 'Lys-63'-linked ubiquitin chains when a ribosome has stalled, initiating the ribosome quality control (RQC) pathway to degrade the potentially detrimental aberrant nascent polypeptide. Deubiquitinated by OTUD3 and USP21, antagonizing ZNF598 activity. Post-translationally, ufmylated by UFL1.

Its subcellular location is the cytoplasm. Its function is as follows. Component of the small ribosomal subunit. The ribosome is a large ribonucleoprotein complex responsible for the synthesis of proteins in the cell. The protein is Small ribosomal subunit protein uS10 (RPS20) of Sus scrofa (Pig).